A 473-amino-acid chain; its full sequence is MKTDTSTFLAQQIVRLRRRDQIRRLMQRDKTPLAILFMAAVVGTLTGLVGVAFEKTVSWVQNMRIGALVQVADHAFLLWPLAFILSALLAMVGYFLVRKFAPEAGGSGIPEIEGALEELRPVRWWRVLPVKFIGGMGTLGAGMVLGREGPTVQIGGNLGRMVLDVFRMRSAEARHTLLATGAAAGLSAAFNAPLAGILFIIEEMRPQFRYNLISIKAVFTGVIMSSIVFRIFNGEAPIIEVGKLSDAPVNTLWLYLILGIIFGCVGPVFNSLVLRTQDMFQRFHGGEIKKWVLMGGAIGGLCGILGLIEPAAAGGGFNLIPIAAAGNFSVGLLLFIFITRVVTTLLCFSSGAPGGIFAPMLALGTLLGTAFGMAAAVLFPQYHLEAGTFAIAGMGALMAASVRAPLTGIVLVLEMTDNYQLILPMIITCLGATLLAQFLGGKPLYSTILARTLAKQDAEQAAKNQNAPAGENT.

Over 1–32 (MKTDTSTFLAQQIVRLRRRDQIRRLMQRDKTP) the chain is Cytoplasmic. Residues 33–69 (LAILFMAAVVGTLTGLVGVAFEKTVSWVQNMRIGALV) traverse the membrane as a helical segment. Over 70-76 (QVADHAF) the chain is Periplasmic. Residues 77 to 100 (LLWPLAFILSALLAMVGYFLVRKF) form a helical membrane-spanning segment. Residues 106–110 (GSGIP) carry the Selectivity filter part_1 motif. Chloride is bound at residue S107. The segment at residues 109–116 (IPEIEGAL) is an intramembrane region (helical). Over 117–123 (EELRPVR) the chain is Cytoplasmic. Transmembrane regions (helical) follow at residues 124–141 (WWRV…TLGA) and 148–166 (EGPT…LDVF). Residues 146-150 (GREGP) carry the Selectivity filter part_2 motif. Residues 167-176 (RMRSAEARHT) lie on the Cytoplasmic side of the membrane. 2 consecutive intramembrane regions (helical) follow at residues 177 to 189 (LLAT…LSAA) and 193 to 201 (PLAGILFII). Over 202–214 (EEMRPQFRYNLIS) the chain is Cytoplasmic. Residues 215–232 (IKAVFTGVIMSSIVFRIF) traverse the membrane as a helical segment. Residues 233-252 (NGEAPIIEVGKLSDAPVNTL) are Periplasmic-facing. A helical membrane pass occupies residues 253–281 (WLYLILGIIFGCVGPVFNSLVLRTQDMFQ). Residues 282-287 (RFHGGE) lie on the Cytoplasmic side of the membrane. Residues 288-309 (IKKWVLMGGAIGGLCGILGLIE) traverse the membrane as a helical segment. At 310-329 (PAAAGGGFNLIPIAAAGNFS) the chain is on the periplasmic side. The next 2 helical transmembrane spans lie at 330–349 (VGLL…LCFS) and 355–376 (GIFA…MAAA). The Selectivity filter part_3 signature appears at 355 to 359 (GIFAP). Chloride is bound by residues I356 and F357. The Periplasmic segment spans residues 377 to 386 (VLFPQYHLEA). Residues 387 to 401 (GTFAIAGMGALMAAS) constitute an intramembrane region (helical). Positions 402–404 (VRA) form an intramembrane region, note=Loop between two helices. The helical intramembrane region spans 405-416 (PLTGIVLVLEMT). The segment at residues 417–421 (DNYQL) is an intramembrane region (note=Loop between two helices). The chain crosses the membrane as a helical span at residues 422–438 (ILPMIITCLGATLLAQF). Residues 439-473 (LGGKPLYSTILARTLAKQDAEQAAKNQNAPAGENT) are Cytoplasmic-facing. Position 445 (Y445) interacts with chloride.

The protein belongs to the chloride channel (TC 2.A.49) family. ClcA subfamily. Homodimer.

Its subcellular location is the cell inner membrane. The enzyme catalyses 2 chloride(in) + H(+)(out) = 2 chloride(out) + H(+)(in). Proton-coupled chloride transporter. Functions as antiport system and exchanges two chloride ions for 1 proton. Probably acts as an electrical shunt for an outwardly-directed proton pump that is linked to amino acid decarboxylation, as part of the extreme acid resistance (XAR) response. The sequence is that of H(+)/Cl(-) exchange transporter ClcA from Salmonella typhi.